Here is a 209-residue protein sequence, read N- to C-terminus: Probable GTP-binding protein EngB (209 aa).

Positions 22-198 constitute an EngB-type G domain; it reads TPLEIAFVGR…NRTVGSWLDA (177 aa). Mg(2+)-binding residues include S37 and T59.

The protein belongs to the TRAFAC class TrmE-Era-EngA-EngB-Septin-like GTPase superfamily. EngB GTPase family. Requires Mg(2+) as cofactor.

Necessary for normal cell division and for the maintenance of normal septation. The sequence is that of Probable GTP-binding protein EngB from Neisseria meningitidis serogroup B (strain ATCC BAA-335 / MC58).